The chain runs to 26 residues: uncharacterized protein (26 aa).

This is an uncharacterized protein from Escherichia coli (strain K12).